Here is a 224-residue protein sequence, read N- to C-terminus: UPF0173 metal-dependent hydrolase Memar_1421 (224 aa).

The protein belongs to the UPF0173 family.

The chain is UPF0173 metal-dependent hydrolase Memar_1421 from Methanoculleus marisnigri (strain ATCC 35101 / DSM 1498 / JR1).